We begin with the raw amino-acid sequence, 539 residues long: Protein lin-14 (539 aa).

Disordered stretches follow at residues 162 to 230 and 262 to 293; these read PTLP…SNHS and ETAP…PRKP. Polar residues-rich tracts occupy residues 163–183 and 193–214; these read TLPN…GTDD and SVDS…NQNI. Over residues 274–284 the composition is skewed to low complexity; sequence NGTTNGTAKAG. Positions 296–440 are involved in sequence-specific DNA-binding; sequence DDIVKIVRNQ…CRRVRHAKKT (145 aa).

In terms of processing, cleaved by caspase ced-3 in vitro. In terms of tissue distribution, high levels in hypodermal, intestinal, body wall muscle, nerve ring, and ventral nerve cord cells of embryos and L1 animals.

Its subcellular location is the nucleus. In terms of biological role, heterochronic protein which controls the choice of stage specific cell fates. Involved in the temporal progression of vulval fate patterning, possibly by inhibiting lin-12. Acts as a transcription factor involved in the stage-specific repression of various genes, including insulin/insulin-like growth factor gene ins-33 and neuropeptide-encoding gene nlp-45. Binds to the consensus sequence 5'-[CT]GGA[AG]-3' in the regulatory elements of target genes. Plays a role in governing the developmental timing of male tail tip morphogenesis. Plays a role in controlling the timing of seam cell development during the larval stages. Plays a role in promoting survival at high temperatures in larvae. Involved in maintenance of the architecture of the ventral nerve cord, perhaps acting via modulating expression of the immunoglobulin domain gene zig-4. May specify L2 and later cell fates, creating a temporal switch. Functionally, may be involved in specifying L1 cell fates. The sequence is that of Protein lin-14 from Caenorhabditis elegans.